The primary structure comprises 2303 residues: Adenomatous polyposis coli protein 2 (2303 aa).

Residues tyrosine 8–glutamine 59 adopt a coiled-coil conformation. 2 disordered regions span residues proline 94–phenylalanine 120 and valine 247–asparagine 270. ARM repeat units follow at residues proline 302 to lysine 341, alanine 479 to tryptophan 518, isoleucine 522 to alanine 562, glutamate 566 to serine 609, glutamate 615 to alanine 654, and alanine 657 to alanine 696. Disordered stretches follow at residues lysine 744–leucine 764 and leucine 816–glycine 835. Basic and acidic residues predominate over residues glycine 825 to serine 834. Positions alanine 840–leucine 864 form a coiled coil. Disordered stretches follow at residues serine 867 to arginine 908, arginine 953 to alanine 986, arginine 1069 to valine 1152, and serine 1173 to glutamine 1228. A compositionally biased stretch (low complexity) spans aspartate 869 to aspartate 878. The stretch at leucine 1058 to serine 1077 is repeat 1. A 5 X 20 AA approximate repeat of F-X-V-E-X-T-P-X-C-F-S-R-X-S-S-L-S-S-L-S region spans residues leucine 1058–serine 1587. The interaction with CTNNB1 stretch occupies residues leucine 1058–serine 1587. The span at arginine 1069 to proline 1084 shows a compositional bias: low complexity. Residues glycine 1088–glutamate 1101 are compositionally biased toward acidic residues. Polar residues predominate over residues threonine 1143–valine 1152. Repeat unit 2 spans residues asparagine 1150–glycine 1169. Positions serine 1173–serine 1186 are enriched in low complexity. The segment covering proline 1202 to lysine 1212 has biased composition (polar residues). Repeat 3 spans residues phenylalanine 1263 to alanine 1282. Disordered stretches follow at residues glycine 1307–alanine 1335, proline 1382–cysteine 1497, tyrosine 1510–valine 1684, leucine 1724–proline 2031, and leucine 2046–glycine 2232. Positions threonine 1390 to threonine 1410 are enriched in polar residues. Repeat 4 spans residues aspartate 1391–threonine 1410. 2 stretches are compositionally biased toward basic and acidic residues: residues alanine 1477–glycine 1489 and phenylalanine 1537–alanine 1548. Residues leucine 1568–serine 1587 form repeat 5. Positions serine 1578 to proline 1589 are enriched in low complexity. A phosphoserine mark is found at serine 1585 and serine 1587. The span at proline 1638–alanine 1654 shows a compositional bias: basic residues. 2 stretches are compositionally biased toward basic and acidic residues: residues threonine 1655–glutamate 1671 and arginine 1739–glycine 1755. The segment covering alanine 1819–alanine 1830 has biased composition (low complexity). The interval proline 1821–leucine 1900 is required for localization to microtubules and function in microtubule stabilization. Residues glutamate 1851–arginine 1860 are compositionally biased toward polar residues. Low complexity-rich tracts occupy residues leucine 1868 to leucine 1886, glycine 1971 to glutamate 1984, leucine 2011 to proline 2026, alanine 2049 to proline 2062, and glycine 2113 to aspartate 2123. An interaction with MAPRE1 and MAPRE3 region spans residues serine 2067–threonine 2144. The span at alanine 2124 to proline 2135 shows a compositional bias: basic and acidic residues. Polar residues predominate over residues lysine 2200–leucine 2209.

Belongs to the adenomatous polyposis coli (APC) family. In terms of assembly, interacts with PSRC1. Interacts with APC. Interacts with CTNNB1. Interacts with MAPRE1 and MAPRE3. Interacts with TP53BP. Interacts possibly with AXIN2. As to expression, widely expressed (at protein level). Specifically expressed in the CNS.

It localises to the cytoplasm. It is found in the cytoskeleton. Its subcellular location is the golgi apparatus. The protein resides in the perinuclear region. Stabilizes microtubules and may regulate actin fiber dynamics through the activation of Rho family GTPases. May also function in Wnt signaling by promoting the rapid degradation of CTNNB1. The sequence is that of Adenomatous polyposis coli protein 2 from Homo sapiens (Human).